The chain runs to 471 residues: Tryptophanase (471 aa).

Lys256 is subject to N6-(pyridoxal phosphate)lysine.

This sequence belongs to the beta-eliminating lyase family. Homotetramer. Requires pyridoxal 5'-phosphate as cofactor.

It catalyses the reaction L-tryptophan + H2O = indole + pyruvate + NH4(+). It participates in amino-acid degradation; L-tryptophan degradation via pyruvate pathway; indole and pyruvate from L-tryptophan: step 1/1. In Salinibacter ruber (strain DSM 13855 / M31), this protein is Tryptophanase.